The chain runs to 673 residues: Zinc finger and BTB domain-containing protein 16 (673 aa).

The 63-residue stretch at 34–96 folds into the BTB domain; the sequence is CDVVIMVDSQ…AYTATLQAKA (63 aa). Phosphoserine; by PDPK1 occurs at positions 76, 184, and 197. Residues 200–300 form an interaction with RUNX1T1 region; that stretch reads KAAVDSLMTI…SARELHYGRE (101 aa). 2 disordered regions span residues 215-236 and 249-332; these read QGTLQPPAGPEEPTLAGGGRHP and DEVP…KHLG. At Ser-256 the chain carries Phosphoserine; by PDPK1. A Phosphothreonine; by PDPK1 modification is found at Thr-282. Composition is skewed to basic and acidic residues over residues 293 to 302 and 319 to 331; these read RELHYGREES and RPEHPAPPPEKHL. 8 C2H2-type zinc fingers span residues 404–426, 432–454, 461–483, 490–512, 518–540, 546–568, 574–596, and 602–624; these read EQCSVCGVELPDNEAVEQHRKLH, YGCELCGKRFLDSLRLRMHLLAH, FVCDQCGAQFSKEDALETHRQTH, VFCLLCGKRFQAQSALQQHMEVH, YICSECNRTFPSHTALKRHLRSH, YECEFCGSCFRDESTLKSHKRIH, YECNGCGKKFSLKHQLETHYRVH, and FECKLCHQRSRDYSAMIKHLRTH. The residue at position 628 (Ser-628) is a Phosphoserine; by PDPK1. The C2H2-type 9 zinc-finger motif lies at 630-652; the sequence is YQCTICTEYCPSLSSMQKHMKGH.

Belongs to the krueppel C2H2-type zinc-finger protein family. As to quaternary structure, binds EPN1. Interacts with ZBTB32 and CUL3. Interacts with ATP7B. Interacts with transcriptional corepressor RUNX1T1 (via its N-terminus); the interaction increases the transcription repression activity of ZBTB16. Interacts (via C2H2-type zinc finger domains 1 and 2) with RNF112. As to expression, within the hematopoietic system, PLZF is expressed in bone marrow, early myeloid cell lines and peripheral blood mononuclear cells. Also expressed in the ovary, and at lower levels, in the kidney and lung.

It localises to the nucleus. Its subcellular location is the nuclear body. It functions in the pathway protein modification; protein ubiquitination. In terms of biological role, acts as a transcriptional repressor. Transcriptional repression may be mediated through recruitment of histone deacetylases to target promoters. May play a role in myeloid maturation and in the development and/or maintenance of other differentiated tissues. Probable substrate-recognition component of an E3 ubiquitin-protein ligase complex which mediates the ubiquitination and subsequent proteasomal degradation of target proteins. This Homo sapiens (Human) protein is Zinc finger and BTB domain-containing protein 16 (ZBTB16).